The chain runs to 224 residues: tRNA (guanine-N(7)-)-methyltransferase (224 aa).

Glu54, Glu79, and Asp129 together coordinate S-adenosyl-L-methionine. Residue Asp129 is part of the active site. Lys133 and Asp165 together coordinate substrate.

It belongs to the class I-like SAM-binding methyltransferase superfamily. TrmB family.

It catalyses the reaction guanosine(46) in tRNA + S-adenosyl-L-methionine = N(7)-methylguanosine(46) in tRNA + S-adenosyl-L-homocysteine. It functions in the pathway tRNA modification; N(7)-methylguanine-tRNA biosynthesis. Its function is as follows. Catalyzes the formation of N(7)-methylguanine at position 46 (m7G46) in tRNA. The sequence is that of tRNA (guanine-N(7)-)-methyltransferase from Chlamydia pneumoniae (Chlamydophila pneumoniae).